We begin with the raw amino-acid sequence, 36 residues long: Conotoxin Bt11.4 (36 aa).

4 cysteine pairs are disulfide-bonded: C2/C16, C9/C21, C15/C26, and C20/C33.

Belongs to the conotoxin I1 superfamily. As to expression, expressed by the venom duct.

The protein resides in the secreted. The sequence is that of Conotoxin Bt11.4 from Conus betulinus (Beech cone).